The primary structure comprises 252 residues: Imidazole glycerol phosphate synthase subunit HisF (252 aa).

Catalysis depends on residues aspartate 11 and aspartate 130.

It belongs to the HisA/HisF family. As to quaternary structure, heterodimer of HisH and HisF.

The protein localises to the cytoplasm. The enzyme catalyses 5-[(5-phospho-1-deoxy-D-ribulos-1-ylimino)methylamino]-1-(5-phospho-beta-D-ribosyl)imidazole-4-carboxamide + L-glutamine = D-erythro-1-(imidazol-4-yl)glycerol 3-phosphate + 5-amino-1-(5-phospho-beta-D-ribosyl)imidazole-4-carboxamide + L-glutamate + H(+). Its pathway is amino-acid biosynthesis; L-histidine biosynthesis; L-histidine from 5-phospho-alpha-D-ribose 1-diphosphate: step 5/9. IGPS catalyzes the conversion of PRFAR and glutamine to IGP, AICAR and glutamate. The HisF subunit catalyzes the cyclization activity that produces IGP and AICAR from PRFAR using the ammonia provided by the HisH subunit. The chain is Imidazole glycerol phosphate synthase subunit HisF from Dictyoglomus turgidum (strain DSM 6724 / Z-1310).